We begin with the raw amino-acid sequence, 317 residues long: Methionyl-tRNA formyltransferase (317 aa).

(6S)-5,6,7,8-tetrahydrofolate is bound at residue 112–115; sequence SLLP.

The protein belongs to the Fmt family.

It carries out the reaction L-methionyl-tRNA(fMet) + (6R)-10-formyltetrahydrofolate = N-formyl-L-methionyl-tRNA(fMet) + (6S)-5,6,7,8-tetrahydrofolate + H(+). In terms of biological role, attaches a formyl group to the free amino group of methionyl-tRNA(fMet). The formyl group appears to play a dual role in the initiator identity of N-formylmethionyl-tRNA by promoting its recognition by IF2 and preventing the misappropriation of this tRNA by the elongation apparatus. The polypeptide is Methionyl-tRNA formyltransferase (Histophilus somni (strain 2336) (Haemophilus somnus)).